A 404-amino-acid polypeptide reads, in one-letter code: tRNA/tmRNA (uracil-C(5))-methyltransferase (404 aa).

S-adenosyl-L-methionine contacts are provided by Q218, Y251, N256, E272, and D332. C358 (nucleophile) is an active-site residue. E392 serves as the catalytic Proton acceptor.

This sequence belongs to the class I-like SAM-binding methyltransferase superfamily. RNA M5U methyltransferase family. TrmA subfamily.

The enzyme catalyses uridine(54) in tRNA + S-adenosyl-L-methionine = 5-methyluridine(54) in tRNA + S-adenosyl-L-homocysteine + H(+). It catalyses the reaction uridine(341) in tmRNA + S-adenosyl-L-methionine = 5-methyluridine(341) in tmRNA + S-adenosyl-L-homocysteine + H(+). Functionally, dual-specificity methyltransferase that catalyzes the formation of 5-methyluridine at position 54 (m5U54) in all tRNAs, and that of position 341 (m5U341) in tmRNA (transfer-mRNA). The chain is tRNA/tmRNA (uracil-C(5))-methyltransferase from Helicobacter hepaticus (strain ATCC 51449 / 3B1).